We begin with the raw amino-acid sequence, 475 residues long: Ribulose bisphosphate carboxylase large chain (475 aa).

Positions 1-2 (MS) are excised as a propeptide. P3 is subject to N-acetylproline. N6,N6,N6-trimethyllysine is present on K14. Substrate contacts are provided by N123 and T173. K175 functions as the Proton acceptor in the catalytic mechanism. K177 provides a ligand contact to substrate. Mg(2+)-binding residues include K201, D203, and E204. N6-carboxylysine is present on K201. H294 serves as the catalytic Proton acceptor. 3 residues coordinate substrate: R295, H327, and S379.

This sequence belongs to the RuBisCO large chain family. Type I subfamily. As to quaternary structure, heterohexadecamer of 8 large chains and 8 small chains; disulfide-linked. The disulfide link is formed within the large subunit homodimers. Mg(2+) is required as a cofactor. Post-translationally, the disulfide bond which can form in the large chain dimeric partners within the hexadecamer appears to be associated with oxidative stress and protein turnover.

Its subcellular location is the plastid. The protein resides in the chloroplast. The catalysed reaction is 2 (2R)-3-phosphoglycerate + 2 H(+) = D-ribulose 1,5-bisphosphate + CO2 + H2O. It carries out the reaction D-ribulose 1,5-bisphosphate + O2 = 2-phosphoglycolate + (2R)-3-phosphoglycerate + 2 H(+). Its function is as follows. RuBisCO catalyzes two reactions: the carboxylation of D-ribulose 1,5-bisphosphate, the primary event in carbon dioxide fixation, as well as the oxidative fragmentation of the pentose substrate in the photorespiration process. Both reactions occur simultaneously and in competition at the same active site. This Chara vulgaris (Common stonewort) protein is Ribulose bisphosphate carboxylase large chain.